The chain runs to 254 residues: Ribosomal RNA small subunit methyltransferase G (254 aa).

Residues G84, F89, 136–137 (VE), and R155 contribute to the S-adenosyl-L-methionine site.

It belongs to the methyltransferase superfamily. RNA methyltransferase RsmG family.

Its subcellular location is the cytoplasm. Its function is as follows. Specifically methylates the N7 position of a guanine in 16S rRNA. This chain is Ribosomal RNA small subunit methyltransferase G, found in Synechococcus sp. (strain CC9311).